Reading from the N-terminus, the 1005-residue chain is Ephrin type-A receptor 5 (1005 aa).

Residues 1–24 form a disordered region; sequence MRGSGPRGAGRRRTQGRGGGGDTP. A signal peptide spans 1-26; sequence MRGSGPRGAGRRRTQGRGGGGDTPRV. Topologically, residues 27–575 are extracellular; that stretch reads PASLAGCYSA…GASNDQSQIP (549 aa). One can recognise an Eph LBD domain in the interval 62–240; the sequence is EVNLLDSRTV…YYKKCPSVVR (179 aa). N-linked (GlcNAc...) asparagine glycans are attached at residues asparagine 266, asparagine 301, asparagine 371, asparagine 425, asparagine 438, and asparagine 463. Fibronectin type-III domains follow at residues 359-469 and 470-564; these read PPSA…TNQA and APSP…TTPV. A helical membrane pass occupies residues 576-596; the sequence is IIGVSVTVGVILLAVMIGFLL. Residues 597-1005 lie on the Cytoplasmic side of the membrane; it reads SGSCCECGCG…MDAVAQVTLE (409 aa). 2 positions are modified to phosphotyrosine; by autocatalysis: tyrosine 652 and tyrosine 658. The region spanning 677 to 938 is the Protein kinase domain; sequence ITIERVIGAG…DIVNMLDKLI (262 aa). ATP is bound by residues 683–691 and lysine 709; that span reads IGAGEFGEV. Residue aspartate 802 is the Proton acceptor of the active site. Phosphotyrosine; by autocatalysis is present on residues tyrosine 835 and tyrosine 984. An SAM domain is found at 967-1005; the sequence is GAYRSVGEWLEATKMGRYTEIFMENGYSSMDAVAQVTLE.

The protein belongs to the protein kinase superfamily. Tyr protein kinase family. Ephrin receptor subfamily. As to quaternary structure, heterotetramer upon binding of the ligand. The heterotetramer is composed of an ephrin dimer and a receptor dimer. Oligomerization is probably required to induce biological responses. Interacts (via SAM domain) with SAMD5 (via SAM domain). Phosphorylated. Phosphorylation is stimulated by the ligand EFNA5. Dephosphorylation upon stimulation by glucose, inhibits EPHA5 forward signaling and results in insulin secretion. Almost exclusively expressed in the nervous system. Predominantly expressed in neurons.

It is found in the cell membrane. It localises to the cell projection. The protein localises to the axon. The protein resides in the dendrite. The catalysed reaction is L-tyrosyl-[protein] + ATP = O-phospho-L-tyrosyl-[protein] + ADP + H(+). Receptor tyrosine kinase which binds promiscuously GPI-anchored ephrin-A family ligands residing on adjacent cells, leading to contact-dependent bidirectional signaling into neighboring cells. The signaling pathway downstream of the receptor is referred to as forward signaling while the signaling pathway downstream of the ephrin ligand is referred to as reverse signaling. Among GPI-anchored ephrin-A ligands, EFNA5 most probably constitutes the cognate/functional ligand for EPHA5. Functions as an axon guidance molecule during development and may be involved in the development of the retinotectal, entorhino-hippocampal and hippocamposeptal pathways. Together with EFNA5 plays also a role in synaptic plasticity in adult brain through regulation of synaptogenesis. In addition to its function in the nervous system, the interaction of EPHA5 with EFNA5 mediates communication between pancreatic islet cells to regulate glucose-stimulated insulin secretion. The polypeptide is Ephrin type-A receptor 5 (Epha5) (Rattus norvegicus (Rat)).